The primary structure comprises 539 residues: Dihydrolipoyllysine-residue acetyltransferase component 2 of pyruvate dehydrogenase complex, mitochondrial (539 aa).

The transit peptide at 1–102 (MASRIINHSK…SSQMRSVRGF (102 aa)) directs the protein to the mitochondrion. Residues 102–122 (FSSSSDLPPHQEIGMPSLSPT) form a disordered region. The 77-residue stretch at 111-187 (HQEIGMPSLS…QVGEVIAITV (77 aa)) folds into the Lipoyl-binding domain. Lys152 is subject to N6-lipoyllysine. Positions 196–244 (FKDYTPSSDTGPAAPEAKPAPSLPKEEKVEKPASAPEAKISKPSSAPSE) are disordered. Residues 248–285 (FASPLARKLAEDNNVPLSSIKGTGPEGRIVKADVEDFL) form the Peripheral subunit-binding (PSBD) domain. Catalysis depends on residues His512 and Asp516.

This sequence belongs to the 2-oxoacid dehydrogenase family. The cofactor is (R)-lipoate.

Its subcellular location is the mitochondrion matrix. It carries out the reaction N(6)-[(R)-dihydrolipoyl]-L-lysyl-[protein] + acetyl-CoA = N(6)-[(R)-S(8)-acetyldihydrolipoyl]-L-lysyl-[protein] + CoA. In terms of biological role, the pyruvate dehydrogenase complex catalyzes the overall conversion of pyruvate to acetyl-CoA and CO(2). It contains multiple copies of three enzymatic components: pyruvate dehydrogenase (E1), dihydrolipoamide acetyltransferase (E2) and lipoamide dehydrogenase (E3). This is Dihydrolipoyllysine-residue acetyltransferase component 2 of pyruvate dehydrogenase complex, mitochondrial from Arabidopsis thaliana (Mouse-ear cress).